Consider the following 373-residue polypeptide: Peroxisomal biogenesis factor 3 (373 aa).

Over 1–15 the chain is Cytoplasmic; it reads MFRSTWNFLKRHKKK. The segment at 1-45 is targeting to peroxisomes; sequence MFRSTWNFLKRHKKKCIFLGTVLGGVYILGKYGQKKIREIQEREA. The helical transmembrane segment at 16 to 36 threads the bilayer; sequence CIFLGTVLGGVYILGKYGQKK. The Peroxisomal portion of the chain corresponds to 37-116; that stretch reads IREIQEREAA…LKIISFTRSI (80 aa). The chain crosses the membrane as a helical span at residues 117–140; sequence VAVYSTCMLVVLLRVQLNIIGGYI. Residues 120 to 136 are interaction with PEX19; that stretch reads YSTCMLVVLLRVQLNII. The Cytoplasmic segment spans residues 141–373; that stretch reads YLDNAAVGKN…AFSTPQQLEK (233 aa).

The protein belongs to the peroxin-3 family. As to quaternary structure, interacts with PEX19.

The protein resides in the peroxisome membrane. In terms of biological role, involved in peroxisome biosynthesis and integrity. Assembles membrane vesicles before the matrix proteins are translocated. As a docking factor for PEX19, is necessary for the import of peroxisomal membrane proteins in the peroxisomes. The protein is Peroxisomal biogenesis factor 3 (PEX3) of Bos taurus (Bovine).